A 1372-amino-acid chain; its full sequence is DNA-directed RNA polymerase subunit beta' (1372 aa).

Residues cysteine 69, cysteine 71, cysteine 84, and cysteine 87 each coordinate Zn(2+). Residues aspartate 460, aspartate 462, and aspartate 464 each coordinate Mg(2+). Cysteine 808, cysteine 882, cysteine 889, and cysteine 892 together coordinate Zn(2+).

It belongs to the RNA polymerase beta' chain family. As to quaternary structure, the RNAP catalytic core consists of 2 alpha, 1 beta, 1 beta' and 1 omega subunit. When a sigma factor is associated with the core the holoenzyme is formed, which can initiate transcription. Mg(2+) is required as a cofactor. Zn(2+) serves as cofactor.

It carries out the reaction RNA(n) + a ribonucleoside 5'-triphosphate = RNA(n+1) + diphosphate. Functionally, DNA-dependent RNA polymerase catalyzes the transcription of DNA into RNA using the four ribonucleoside triphosphates as substrates. The protein is DNA-directed RNA polymerase subunit beta' of Rickettsia typhi (strain ATCC VR-144 / Wilmington).